The chain runs to 288 residues: ATP synthase subunit a (288 aa).

Helical transmembrane passes span 47–67, 104–124, 157–177, 199–219, 237–257, and 258–278; these read LDSMLWSIGLGIVFCAIFWMV, LIAPLALTIFVWIFLMNLMDL, DPNITLGMSFSVFILILFYSI, PIVQIILIPINFILEFVTLIA, LIFILIALMPFWIQWALSVPW, and AIFHILIITLQAFVFMMLTIV.

This sequence belongs to the ATPase A chain family. F-type ATPases have 2 components, CF(1) - the catalytic core - and CF(0) - the membrane proton channel. CF(1) has five subunits: alpha(3), beta(3), gamma(1), delta(1), epsilon(1). CF(0) has three main subunits: a(1), b(2) and c(9-12). The alpha and beta chains form an alternating ring which encloses part of the gamma chain. CF(1) is attached to CF(0) by a central stalk formed by the gamma and epsilon chains, while a peripheral stalk is formed by the delta and b chains.

Its subcellular location is the cell inner membrane. Functionally, key component of the proton channel; it plays a direct role in the translocation of protons across the membrane. This chain is ATP synthase subunit a, found in Psychrobacter arcticus (strain DSM 17307 / VKM B-2377 / 273-4).